Reading from the N-terminus, the 390-residue chain is Phosphopentomutase (390 aa).

Positions 11, 283, 288, 324, 325, and 336 each coordinate Mn(2+).

It belongs to the phosphopentomutase family. Requires Mn(2+) as cofactor.

Its subcellular location is the cytoplasm. The catalysed reaction is 2-deoxy-alpha-D-ribose 1-phosphate = 2-deoxy-D-ribose 5-phosphate. It carries out the reaction alpha-D-ribose 1-phosphate = D-ribose 5-phosphate. Its pathway is carbohydrate degradation; 2-deoxy-D-ribose 1-phosphate degradation; D-glyceraldehyde 3-phosphate and acetaldehyde from 2-deoxy-alpha-D-ribose 1-phosphate: step 1/2. Isomerase that catalyzes the conversion of deoxy-ribose 1-phosphate (dRib-1-P) and ribose 1-phosphate (Rib-1-P) to deoxy-ribose 5-phosphate (dRib-5-P) and ribose 5-phosphate (Rib-5-P), respectively. The sequence is that of Phosphopentomutase from Alkaliphilus oremlandii (strain OhILAs) (Clostridium oremlandii (strain OhILAs)).